We begin with the raw amino-acid sequence, 1073 residues long: Error-prone DNA polymerase (1073 aa).

The interval 41 to 73 is disordered; the sequence is EAEPECLSTPRPGPGSTEVPGERRGSRQGERSG. Basic and acidic residues predominate over residues 60 to 73; it reads PGERRGSRQGERSG.

The protein belongs to the DNA polymerase type-C family. DnaE2 subfamily.

The protein localises to the cytoplasm. It carries out the reaction DNA(n) + a 2'-deoxyribonucleoside 5'-triphosphate = DNA(n+1) + diphosphate. Functionally, DNA polymerase involved in damage-induced mutagenesis and translesion synthesis (TLS). It is not the major replicative DNA polymerase. This Corynebacterium efficiens (strain DSM 44549 / YS-314 / AJ 12310 / JCM 11189 / NBRC 100395) protein is Error-prone DNA polymerase.